Reading from the N-terminus, the 492-residue chain is uncharacterized protein (492 aa).

A run of 12 helical transmembrane segments spans residues 13-33, 42-62, 97-117, 150-170, 180-200, 222-242, 258-278, 320-340, 359-379, 391-411, 428-448, and 463-483; these read LGFILASVGSAIGLGNIWRFG, GAFLIPYIVALLCVGIPLMIL, FIITSYYVVIIAWCLYYLIIL, GILVSTLAVWGIVALILSAGI, IMIPFLLFLIILLVLNALTLP, VWLSAFSQIFFSLSLGFGILI, AVTVSLLNCGFSFLAGFAVFG, FGIVFFLALVFAGISSAVSIV, LLAVLALFIIISPIFTTGAGL, GYLLPIAAILEIIIAIWLFGG, VWWKYLAGVVSPIILTAVVFL, and TTYVIFGALIIPLAFVVSVIL.

The protein belongs to the sodium:neurotransmitter symporter (SNF) (TC 2.A.22) family.

The protein resides in the cell membrane. Its function is as follows. Putative sodium-dependent transporter. This is an uncharacterized protein from Methanocaldococcus jannaschii (strain ATCC 43067 / DSM 2661 / JAL-1 / JCM 10045 / NBRC 100440) (Methanococcus jannaschii).